The chain runs to 174 residues: Crossover junction endodeoxyribonuclease RuvC (174 aa).

Catalysis depends on residues D8, E67, and D139. Mg(2+) contacts are provided by D8, E67, and D139.

This sequence belongs to the RuvC family. As to quaternary structure, homodimer which binds Holliday junction (HJ) DNA. The HJ becomes 2-fold symmetrical on binding to RuvC with unstacked arms; it has a different conformation from HJ DNA in complex with RuvA. In the full resolvosome a probable DNA-RuvA(4)-RuvB(12)-RuvC(2) complex forms which resolves the HJ. Mg(2+) is required as a cofactor.

It localises to the cytoplasm. The catalysed reaction is Endonucleolytic cleavage at a junction such as a reciprocal single-stranded crossover between two homologous DNA duplexes (Holliday junction).. The RuvA-RuvB-RuvC complex processes Holliday junction (HJ) DNA during genetic recombination and DNA repair. Endonuclease that resolves HJ intermediates. Cleaves cruciform DNA by making single-stranded nicks across the HJ at symmetrical positions within the homologous arms, yielding a 5'-phosphate and a 3'-hydroxyl group; requires a central core of homology in the junction. The consensus cleavage sequence is 5'-(A/T)TT(C/G)-3'. Cleavage occurs on the 3'-side of the TT dinucleotide at the point of strand exchange. HJ branch migration catalyzed by RuvA-RuvB allows RuvC to scan DNA until it finds its consensus sequence, where it cleaves and resolves the cruciform DNA. The protein is Crossover junction endodeoxyribonuclease RuvC of Pseudomonas putida (strain W619).